The following is a 310-amino-acid chain: tRNA dimethylallyltransferase (310 aa).

14–21 (GPTASGKS) serves as a coordination point for ATP. A substrate-binding site is contributed by 16-21 (TASGKS). Interaction with substrate tRNA regions lie at residues 39 to 42 (DSMQ) and 163 to 167 (QRIVR).

The protein belongs to the IPP transferase family. Monomer. Mg(2+) serves as cofactor.

The enzyme catalyses adenosine(37) in tRNA + dimethylallyl diphosphate = N(6)-dimethylallyladenosine(37) in tRNA + diphosphate. Its function is as follows. Catalyzes the transfer of a dimethylallyl group onto the adenine at position 37 in tRNAs that read codons beginning with uridine, leading to the formation of N6-(dimethylallyl)adenosine (i(6)A). The polypeptide is tRNA dimethylallyltransferase (Brucella melitensis biotype 2 (strain ATCC 23457)).